We begin with the raw amino-acid sequence, 560 residues long: DNA ligase B (560 aa).

Lysine 128 functions as the N6-AMP-lysine intermediate in the catalytic mechanism.

Belongs to the NAD-dependent DNA ligase family. LigB subfamily.

The enzyme catalyses NAD(+) + (deoxyribonucleotide)n-3'-hydroxyl + 5'-phospho-(deoxyribonucleotide)m = (deoxyribonucleotide)n+m + AMP + beta-nicotinamide D-nucleotide.. Its function is as follows. Catalyzes the formation of phosphodiester linkages between 5'-phosphoryl and 3'-hydroxyl groups in double-stranded DNA using NAD as a coenzyme and as the energy source for the reaction. This is DNA ligase B from Azotobacter vinelandii (strain DJ / ATCC BAA-1303).